Consider the following 425-residue polypeptide: Dihydroorotase (425 aa).

Zn(2+)-binding residues include histidine 61 and histidine 63. Substrate is bound by residues histidine 63–arginine 65 and asparagine 95. The Zn(2+) site is built by aspartate 153, histidine 180, and histidine 233. Asparagine 279 serves as a coordination point for substrate. Aspartate 306 contacts Zn(2+). Aspartate 306 is an active-site residue. Histidine 310 lines the substrate pocket.

Belongs to the metallo-dependent hydrolases superfamily. DHOase family. Class I DHOase subfamily. Zn(2+) is required as a cofactor.

It catalyses the reaction (S)-dihydroorotate + H2O = N-carbamoyl-L-aspartate + H(+). The protein operates within pyrimidine metabolism; UMP biosynthesis via de novo pathway; (S)-dihydroorotate from bicarbonate: step 3/3. Catalyzes the reversible cyclization of carbamoyl aspartate to dihydroorotate. In Geobacter sulfurreducens (strain ATCC 51573 / DSM 12127 / PCA), this protein is Dihydroorotase.